The chain runs to 241 residues: Uridylate kinase (241 aa).

15 to 18 (KLSG) lines the ATP pocket. The involved in allosteric activation by GTP stretch occupies residues 23 to 28 (GSEGFG). A UMP-binding site is contributed by G57. ATP-binding residues include G58 and R62. Residues D77 and 138 to 145 (TGNPFFTT) contribute to the UMP site. ATP contacts are provided by T165, F171, and D174.

The protein belongs to the UMP kinase family. In terms of assembly, homohexamer.

The protein localises to the cytoplasm. The catalysed reaction is UMP + ATP = UDP + ADP. The protein operates within pyrimidine metabolism; CTP biosynthesis via de novo pathway; UDP from UMP (UMPK route): step 1/1. Its activity is regulated as follows. Allosterically activated by GTP. Inhibited by UTP. Catalyzes the reversible phosphorylation of UMP to UDP. This is Uridylate kinase from Vibrio vulnificus (strain CMCP6).